Consider the following 95-residue polypeptide: N(2)-fixation sustaining protein CowN (95 aa).

It belongs to the CowN family.

In terms of biological role, is required to sustain N(2)-dependent growth in the presence of low levels of carbon monoxide (CO). Probably acts by protecting the N(2) fixation ability of the nitrogenase complex, which is inactivated in the presence of CO. The sequence is that of N(2)-fixation sustaining protein CowN from Allochromatium vinosum (strain ATCC 17899 / DSM 180 / NBRC 103801 / NCIMB 10441 / D) (Chromatium vinosum).